The following is a 618-amino-acid chain: Dihydroxy-acid dehydratase (618 aa).

Asp-81 is a binding site for Mg(2+). Cys-122 contributes to the [2Fe-2S] cluster binding site. Mg(2+)-binding residues include Asp-123 and Lys-124. Lys-124 is subject to N6-carboxylysine. Cys-195 lines the [2Fe-2S] cluster pocket. A Mg(2+)-binding site is contributed by Glu-490. The active-site Proton acceptor is the Ser-516.

It belongs to the IlvD/Edd family. As to quaternary structure, homodimer. The cofactor is [2Fe-2S] cluster. Mg(2+) serves as cofactor.

The catalysed reaction is (2R)-2,3-dihydroxy-3-methylbutanoate = 3-methyl-2-oxobutanoate + H2O. It catalyses the reaction (2R,3R)-2,3-dihydroxy-3-methylpentanoate = (S)-3-methyl-2-oxopentanoate + H2O. Its pathway is amino-acid biosynthesis; L-isoleucine biosynthesis; L-isoleucine from 2-oxobutanoate: step 3/4. The protein operates within amino-acid biosynthesis; L-valine biosynthesis; L-valine from pyruvate: step 3/4. In terms of biological role, functions in the biosynthesis of branched-chain amino acids. Catalyzes the dehydration of (2R,3R)-2,3-dihydroxy-3-methylpentanoate (2,3-dihydroxy-3-methylvalerate) into 2-oxo-3-methylpentanoate (2-oxo-3-methylvalerate) and of (2R)-2,3-dihydroxy-3-methylbutanoate (2,3-dihydroxyisovalerate) into 2-oxo-3-methylbutanoate (2-oxoisovalerate), the penultimate precursor to L-isoleucine and L-valine, respectively. The chain is Dihydroxy-acid dehydratase from Gluconobacter oxydans (strain 621H) (Gluconobacter suboxydans).